The following is a 72-amino-acid chain: uncharacterized protein (72 aa).

Residues 46-66 (AIFVFNLCFIPNLCVACIFNV) traverse the membrane as a helical segment.

Its subcellular location is the membrane. This is an uncharacterized protein from Saccharomyces cerevisiae (strain ATCC 204508 / S288c) (Baker's yeast).